The primary structure comprises 348 residues: NADH-quinone oxidoreductase subunit H (348 aa).

Transmembrane regions (helical) follow at residues 10–30 (LPLF…LVLI), 82–102 (GVFL…WAVV), 115–135 (VGLL…IMGG), 161–181 (IGFV…TTIV), 199–219 (LLDW…ISAL), 251–271 (LFFL…TILF), 287–307 (VPGV…FAMV), and 322–342 (LGWK…AAIL).

It belongs to the complex I subunit 1 family. NDH-1 is composed of 14 different subunits. Subunits NuoA, H, J, K, L, M, N constitute the membrane sector of the complex.

The protein resides in the cell inner membrane. It catalyses the reaction a quinone + NADH + 5 H(+)(in) = a quinol + NAD(+) + 4 H(+)(out). In terms of biological role, NDH-1 shuttles electrons from NADH, via FMN and iron-sulfur (Fe-S) centers, to quinones in the respiratory chain. The immediate electron acceptor for the enzyme in this species is believed to be ubiquinone. Couples the redox reaction to proton translocation (for every two electrons transferred, four hydrogen ions are translocated across the cytoplasmic membrane), and thus conserves the redox energy in a proton gradient. This subunit may bind ubiquinone. This chain is NADH-quinone oxidoreductase subunit H, found in Bartonella bacilliformis (strain ATCC 35685 / KC583 / Herrer 020/F12,63).